A 115-amino-acid polypeptide reads, in one-letter code: Regulator of ribonuclease activity B (115 aa).

It belongs to the RraB family. Interacts with the C-terminal region of Rne.

The protein localises to the cytoplasm. Globally modulates RNA abundance by binding to RNase E (Rne) and regulating its endonucleolytic activity. Can modulate Rne action in a substrate-dependent manner by altering the composition of the degradosome. This chain is Regulator of ribonuclease activity B, found in Aeromonas hydrophila subsp. hydrophila (strain ATCC 7966 / DSM 30187 / BCRC 13018 / CCUG 14551 / JCM 1027 / KCTC 2358 / NCIMB 9240 / NCTC 8049).